The chain runs to 153 residues: Putative adenylate kinase (153 aa).

ATP contacts are provided by G12, G14, K15, S16, and T17. The segment at 31–47 is NMP; sequence EGNELAKEYGCLFDEEV. An LID region spans residues 94–104; that stretch reads ARGYSEEKIQE. Residue R95 participates in ATP binding.

It belongs to the adenylate kinase family. AK6 subfamily. As to quaternary structure, interacts with uS11. Not a structural component of 40S pre-ribosomes, but transiently interacts with them by binding to uS11.

It carries out the reaction AMP + ATP = 2 ADP. It catalyses the reaction ATP + H2O = ADP + phosphate + H(+). Functionally, broad-specificity nucleoside monophosphate (NMP) kinase that catalyzes the reversible transfer of the terminal phosphate group between nucleoside triphosphates and monophosphates. Also has ATPase activity. Involved in the late maturation steps of the 30S ribosomal particles, specifically 16S rRNA maturation. While NMP activity is not required for ribosome maturation, ATPase activity is. Associates transiently with small ribosomal subunit protein uS11. ATP hydrolysis breaks the interaction with uS11. May temporarily remove uS11 from the ribosome to enable a conformational change of the ribosomal RNA that is needed for the final maturation step of the small ribosomal subunit. The protein is Putative adenylate kinase of Thermoplasma volcanium (strain ATCC 51530 / DSM 4299 / JCM 9571 / NBRC 15438 / GSS1).